A 129-amino-acid polypeptide reads, in one-letter code: Putative membrane protein insertion efficiency factor (129 aa).

The protein belongs to the UPF0161 family.

The protein localises to the cell inner membrane. In terms of biological role, could be involved in insertion of integral membrane proteins into the membrane. This chain is Putative membrane protein insertion efficiency factor, found in Rhodopseudomonas palustris (strain ATCC BAA-98 / CGA009).